Consider the following 428-residue polypeptide: Septin homolog spn7 (428 aa).

In terms of domain architecture, Septin-type G spans 15 to 290 (KGKKLRIMVA…ENYRTEKLSN (276 aa)). Positions 25–32 (GSSYTSYQ) are G1 motif. GTP contacts are provided by residues 25–32 (GSSYTSYQ), glycine 86, 166–174 (NSNAFTEEE), and glycine 224. The tract at residues 83–86 (EVNG) is G3 motif. The interval 165–168 (GNSN) is G4 motif. 2 disordered regions span residues 287–345 (KLSN…SEEL) and 387–414 (KEFP…KKMD). The span at 290–307 (NDSPSNTSLSLQKQNSIV) shows a compositional bias: polar residues. The span at 309–325 (NEDKRSVNGSERTETRS) shows a compositional bias: basic and acidic residues. Polar residues-rich tracts occupy residues 326–339 (SIDQ…VSDS) and 392–405 (RTTS…NNTT).

Belongs to the TRAFAC class TrmE-Era-EngA-EngB-Septin-like GTPase superfamily. Septin GTPase family. In terms of assembly, component of the sporulation-specific septin complex composed of at least spn2, spn5, spn6 and spn7.

It localises to the cytoplasm. The protein resides in the nucleus. Its subcellular location is the forespore membrane. Septin-like protein involved in the correct orientation of forespore membrane extension during sporulation. Binds phosphatidylinositol 4-phosphate. In Schizosaccharomyces pombe (strain 972 / ATCC 24843) (Fission yeast), this protein is Septin homolog spn7 (spn7).